Consider the following 329-residue polypeptide: Peroxidase 17 (329 aa).

The signal sequence occupies residues 1 to 19 (MSLLPHLILYLTLLTVVVT). 4 disulfide bridges follow: Cys32/Cys112, Cys65/Cys70, Cys118/Cys315, and Cys197/Cys229. The Proton acceptor role is filled by His63. Ca(2+)-binding residues include Asp64, Val67, Gly69, Asp71, and Ser73. Residue Pro160 coordinates substrate. Asn165 and Asn177 each carry an N-linked (GlcNAc...) asparagine glycan. Position 190 (His190) interacts with heme b. Residue Ser191 participates in Ca(2+) binding. N-linked (GlcNAc...) asparagine glycosylation is found at Asn206 and Asn236. Positions 242, 244, and 249 each coordinate Ca(2+).

It belongs to the peroxidase family. Classical plant (class III) peroxidase subfamily. Heme b serves as cofactor. The cofactor is Ca(2+).

It is found in the secreted. The protein resides in the vacuole. It carries out the reaction 2 a phenolic donor + H2O2 = 2 a phenolic radical donor + 2 H2O. Functionally, removal of H(2)O(2), oxidation of toxic reductants, biosynthesis and degradation of lignin, suberization, auxin catabolism, response to environmental stresses such as wounding, pathogen attack and oxidative stress. These functions might be dependent on each isozyme/isoform in each plant tissue. The sequence is that of Peroxidase 17 (PER17) from Arabidopsis thaliana (Mouse-ear cress).